The sequence spans 171 residues: S-ribosylhomocysteine lyase (171 aa).

Fe cation is bound by residues H54, H58, and C128.

This sequence belongs to the LuxS family. In terms of assembly, homodimer. Fe cation serves as cofactor.

The catalysed reaction is S-(5-deoxy-D-ribos-5-yl)-L-homocysteine = (S)-4,5-dihydroxypentane-2,3-dione + L-homocysteine. In terms of biological role, involved in the synthesis of autoinducer 2 (AI-2) which is secreted by bacteria and is used to communicate both the cell density and the metabolic potential of the environment. The regulation of gene expression in response to changes in cell density is called quorum sensing. Catalyzes the transformation of S-ribosylhomocysteine (RHC) to homocysteine (HC) and 4,5-dihydroxy-2,3-pentadione (DPD). The chain is S-ribosylhomocysteine lyase from Aliarcobacter butzleri (strain RM4018) (Arcobacter butzleri).